The primary structure comprises 309 residues: Bifunctional methylenetetrahydrofolate dehydrogenase/cyclohydrolase, mitochondrial (309 aa).

The protein belongs to the tetrahydrofolate dehydrogenase/cyclohydrolase family. Homodimer. Mg(2+) serves as cofactor.

The protein resides in the mitochondrion. It catalyses the reaction (6R)-5,10-methylene-5,6,7,8-tetrahydrofolate + NAD(+) = (6R)-5,10-methenyltetrahydrofolate + NADH. The enzyme catalyses (6R)-5,10-methenyltetrahydrofolate + H2O = (6R)-10-formyltetrahydrofolate + H(+). Functionally, may play a role in spermatogenesis. The chain is Bifunctional methylenetetrahydrofolate dehydrogenase/cyclohydrolase, mitochondrial (Nmdmc) from Drosophila melanogaster (Fruit fly).